A 1168-amino-acid chain; its full sequence is Transcription-repair-coupling factor (1168 aa).

Residues 633-794 (DMQKSRPMDR…MLGVRDLSVI (162 aa)) enclose the Helicase ATP-binding domain. 646–653 (GDVGYGKT) contacts ATP. The DEEQ box signature appears at 747-750 (DEEQ). A Helicase C-terminal domain is found at 808-969 (VLEQNMSFIK…GFKIAMRDLN (162 aa)).

The protein in the N-terminal section; belongs to the UvrB family. In the C-terminal section; belongs to the helicase family. RecG subfamily.

The protein resides in the cytoplasm. Couples transcription and DNA repair by recognizing RNA polymerase (RNAP) stalled at DNA lesions. Mediates ATP-dependent release of RNAP and its truncated transcript from the DNA, and recruitment of nucleotide excision repair machinery to the damaged site. The chain is Transcription-repair-coupling factor from Staphylococcus aureus (strain bovine RF122 / ET3-1).